The sequence spans 220 residues: Protein GrpE (220 aa).

A disordered region spans residues 1–22; sequence MSDEKNKFTDASFENCDLKNPS.

The protein belongs to the GrpE family. As to quaternary structure, homodimer.

The protein localises to the cytoplasm. Functionally, participates actively in the response to hyperosmotic and heat shock by preventing the aggregation of stress-denatured proteins, in association with DnaK and GrpE. It is the nucleotide exchange factor for DnaK and may function as a thermosensor. Unfolded proteins bind initially to DnaJ; upon interaction with the DnaJ-bound protein, DnaK hydrolyzes its bound ATP, resulting in the formation of a stable complex. GrpE releases ADP from DnaK; ATP binding to DnaK triggers the release of the substrate protein, thus completing the reaction cycle. Several rounds of ATP-dependent interactions between DnaJ, DnaK and GrpE are required for fully efficient folding. The sequence is that of Protein GrpE from Bartonella henselae (strain ATCC 49882 / DSM 28221 / CCUG 30454 / Houston 1) (Rochalimaea henselae).